The sequence spans 41 residues: Large ribosomal subunit protein bL36 (41 aa).

This sequence belongs to the bacterial ribosomal protein bL36 family.

The polypeptide is Large ribosomal subunit protein bL36 (Rhodopseudomonas palustris (strain BisB5)).